A 503-amino-acid chain; its full sequence is uncharacterized protein (503 aa).

It belongs to the Mg-chelatase subunits D/I family. ComM subfamily.

This is an uncharacterized protein from Mycobacterium bovis (strain ATCC BAA-935 / AF2122/97).